Consider the following 159-residue polypeptide: 2-C-methyl-D-erythritol 2,4-cyclodiphosphate synthase (159 aa).

A divalent metal cation-binding residues include Asp-10 and His-12. 4-CDP-2-C-methyl-D-erythritol 2-phosphate-binding positions include 10-12 (DVH) and 36-37 (HS). His-44 provides a ligand contact to a divalent metal cation. 4-CDP-2-C-methyl-D-erythritol 2-phosphate-binding positions include 58-60 (DIG), 63-67 (FPDTD), 102-108 (AQAPKMA), 134-137 (TTTE), Phe-141, and Arg-144.

This sequence belongs to the IspF family. Homotrimer. It depends on a divalent metal cation as a cofactor.

It catalyses the reaction 4-CDP-2-C-methyl-D-erythritol 2-phosphate = 2-C-methyl-D-erythritol 2,4-cyclic diphosphate + CMP. It participates in isoprenoid biosynthesis; isopentenyl diphosphate biosynthesis via DXP pathway; isopentenyl diphosphate from 1-deoxy-D-xylulose 5-phosphate: step 4/6. Involved in the biosynthesis of isopentenyl diphosphate (IPP) and dimethylallyl diphosphate (DMAPP), two major building blocks of isoprenoid compounds. Catalyzes the conversion of 4-diphosphocytidyl-2-C-methyl-D-erythritol 2-phosphate (CDP-ME2P) to 2-C-methyl-D-erythritol 2,4-cyclodiphosphate (ME-CPP) with a corresponding release of cytidine 5-monophosphate (CMP). The sequence is that of 2-C-methyl-D-erythritol 2,4-cyclodiphosphate synthase from Shewanella frigidimarina (strain NCIMB 400).